Reading from the N-terminus, the 372-residue chain is 4-hydroxy-3-methylbut-2-en-1-yl diphosphate synthase (flavodoxin) (372 aa).

The [4Fe-4S] cluster site is built by Cys-270, Cys-273, Cys-305, and Glu-312.

This sequence belongs to the IspG family. Requires [4Fe-4S] cluster as cofactor.

The catalysed reaction is (2E)-4-hydroxy-3-methylbut-2-enyl diphosphate + oxidized [flavodoxin] + H2O + 2 H(+) = 2-C-methyl-D-erythritol 2,4-cyclic diphosphate + reduced [flavodoxin]. Its pathway is isoprenoid biosynthesis; isopentenyl diphosphate biosynthesis via DXP pathway; isopentenyl diphosphate from 1-deoxy-D-xylulose 5-phosphate: step 5/6. Converts 2C-methyl-D-erythritol 2,4-cyclodiphosphate (ME-2,4cPP) into 1-hydroxy-2-methyl-2-(E)-butenyl 4-diphosphate. The chain is 4-hydroxy-3-methylbut-2-en-1-yl diphosphate synthase (flavodoxin) from Marinobacter nauticus (strain ATCC 700491 / DSM 11845 / VT8) (Marinobacter aquaeolei).